A 187-amino-acid chain; its full sequence is Large ribosomal subunit protein uL5 (187 aa).

This sequence belongs to the universal ribosomal protein uL5 family. Part of the 50S ribosomal subunit; part of the 5S rRNA/L5/L18/L25 subcomplex. Contacts the 5S rRNA and the P site tRNA. Forms a bridge to the 30S subunit in the 70S ribosome.

This is one of the proteins that bind and probably mediate the attachment of the 5S RNA into the large ribosomal subunit, where it forms part of the central protuberance. In the 70S ribosome it contacts protein S13 of the 30S subunit (bridge B1b), connecting the 2 subunits; this bridge is implicated in subunit movement. Contacts the P site tRNA; the 5S rRNA and some of its associated proteins might help stabilize positioning of ribosome-bound tRNAs. This chain is Large ribosomal subunit protein uL5, found in Mycobacterium avium (strain 104).